Reading from the N-terminus, the 163-residue chain is Oocyte-secreted protein 1 (163 aa).

The N-terminal stretch at 1 to 21 (MKPSSGLRGLLVLFSLTWTCA) is a signal peptide.

It belongs to the PLAC1 family. In terms of tissue distribution, oocyte-specific.

The protein localises to the secreted. Functionally, may be involved in cell differentiation. This chain is Oocyte-secreted protein 1 (OOSP1), found in Bos taurus (Bovine).